Reading from the N-terminus, the 154-residue chain is MYAVVQVRGVVNTRKDIKDTLKMLRLHHINHCVLVADTPENLGMIRKVKDYVAYGEVDAATLETILKTRGRVIGDDPLTDEYIKSNSSTYSSIVEFAQALAKGESRLRDIPGLKPVLRLHPPRKGYKTTKRTFVQGGALGYYGPEINTLLYKMR.

Belongs to the universal ribosomal protein uL30 family. Part of the 50S ribosomal subunit.

In Methanoregula boonei (strain DSM 21154 / JCM 14090 / 6A8), this protein is Large ribosomal subunit protein uL30.